The chain runs to 118 residues: DNA-directed RNA polymerase subunit omega (118 aa).

This sequence belongs to the RNA polymerase subunit omega family. The RNAP catalytic core consists of 2 alpha, 1 beta, 1 beta' and 1 omega subunit. When a sigma factor is associated with the core the holoenzyme is formed, which can initiate transcription.

It catalyses the reaction RNA(n) + a ribonucleoside 5'-triphosphate = RNA(n+1) + diphosphate. Its function is as follows. Promotes RNA polymerase assembly. Latches the N- and C-terminal regions of the beta' subunit thereby facilitating its interaction with the beta and alpha subunits. The protein is DNA-directed RNA polymerase subunit omega of Paracoccus denitrificans (strain Pd 1222).